Reading from the N-terminus, the 133-residue chain is ATP synthase epsilon chain (133 aa).

This sequence belongs to the ATPase epsilon chain family. As to quaternary structure, F-type ATPases have 2 components, CF(1) - the catalytic core - and CF(0) - the membrane proton channel. CF(1) has five subunits: alpha(3), beta(3), gamma(1), delta(1), epsilon(1). CF(0) has three main subunits: a, b and c.

It localises to the cell membrane. In terms of biological role, produces ATP from ADP in the presence of a proton gradient across the membrane. The chain is ATP synthase epsilon chain from Bacillus anthracis (strain A0248).